A 177-amino-acid polypeptide reads, in one-letter code: Large ribosomal subunit protein uL5 (177 aa).

The protein belongs to the universal ribosomal protein uL5 family. Part of the 50S ribosomal subunit; part of the 5S rRNA/L5/L18/L25 subcomplex. Contacts the 5S rRNA and the P site tRNA. Forms a bridge to the 30S subunit in the 70S ribosome.

Functionally, this is one of the proteins that bind and probably mediate the attachment of the 5S RNA into the large ribosomal subunit, where it forms part of the central protuberance. In the 70S ribosome it contacts protein S13 of the 30S subunit (bridge B1b), connecting the 2 subunits; this bridge is implicated in subunit movement. Contacts the P site tRNA; the 5S rRNA and some of its associated proteins might help stabilize positioning of ribosome-bound tRNAs. This Ehrlichia ruminantium (strain Welgevonden) protein is Large ribosomal subunit protein uL5.